The chain runs to 244 residues: tRNA (guanine-N(1)-)-methyltransferase (244 aa).

S-adenosyl-L-methionine is bound by residues Gly-112 and 131-136; that span reads LGDFIL. Residues 211–244 form a disordered region; sequence IKRTSDRRPDLLEKWQQEKKPGSREQGSREQGEK.

It belongs to the RNA methyltransferase TrmD family. In terms of assembly, homodimer.

It is found in the cytoplasm. The catalysed reaction is guanosine(37) in tRNA + S-adenosyl-L-methionine = N(1)-methylguanosine(37) in tRNA + S-adenosyl-L-homocysteine + H(+). Its function is as follows. Specifically methylates guanosine-37 in various tRNAs. This Trichormus variabilis (strain ATCC 29413 / PCC 7937) (Anabaena variabilis) protein is tRNA (guanine-N(1)-)-methyltransferase.